We begin with the raw amino-acid sequence, 229 residues long: 2,3-bisphosphoglycerate-dependent phosphoglycerate mutase (229 aa).

Substrate contacts are provided by residues 7–14 (RHGQSEWN), 20–21 (TG), R59, 86–89 (ERHY), K97, 113–114 (RR), and 182–183 (GN). H8 acts as the Tele-phosphohistidine intermediate in catalysis. The active-site Proton donor/acceptor is E86.

This sequence belongs to the phosphoglycerate mutase family. BPG-dependent PGAM subfamily.

It carries out the reaction (2R)-2-phosphoglycerate = (2R)-3-phosphoglycerate. It participates in carbohydrate degradation; glycolysis; pyruvate from D-glyceraldehyde 3-phosphate: step 3/5. In terms of biological role, catalyzes the interconversion of 2-phosphoglycerate and 3-phosphoglycerate. This Listeria monocytogenes serotype 4b (strain F2365) protein is 2,3-bisphosphoglycerate-dependent phosphoglycerate mutase.